The following is a 337-amino-acid chain: Holliday junction branch migration complex subunit RuvB (337 aa).

A large ATPase domain (RuvB-L) region spans residues 1 to 180 (MTRLISADKS…FGVISRLEFY (180 aa)). ATP contacts are provided by residues L19, R20, G61, K64, T65, T66, 127–129 (EDF), R170, Y180, and R217. Mg(2+) is bound at residue T65. Residues 181–251 (THDELAFIIT…VADQALALLE (71 aa)) form a small ATPAse domain (RuvB-S) region. Positions 254-337 (EMGFDMMDRA…APEPPQGKLF (84 aa)) are head domain (RuvB-H). DNA contacts are provided by R309 and R314.

The protein belongs to the RuvB family. Homohexamer. Forms an RuvA(8)-RuvB(12)-Holliday junction (HJ) complex. HJ DNA is sandwiched between 2 RuvA tetramers; dsDNA enters through RuvA and exits via RuvB. An RuvB hexamer assembles on each DNA strand where it exits the tetramer. Each RuvB hexamer is contacted by two RuvA subunits (via domain III) on 2 adjacent RuvB subunits; this complex drives branch migration. In the full resolvosome a probable DNA-RuvA(4)-RuvB(12)-RuvC(2) complex forms which resolves the HJ.

It is found in the cytoplasm. It carries out the reaction ATP + H2O = ADP + phosphate + H(+). The RuvA-RuvB-RuvC complex processes Holliday junction (HJ) DNA during genetic recombination and DNA repair, while the RuvA-RuvB complex plays an important role in the rescue of blocked DNA replication forks via replication fork reversal (RFR). RuvA specifically binds to HJ cruciform DNA, conferring on it an open structure. The RuvB hexamer acts as an ATP-dependent pump, pulling dsDNA into and through the RuvAB complex. RuvB forms 2 homohexamers on either side of HJ DNA bound by 1 or 2 RuvA tetramers; 4 subunits per hexamer contact DNA at a time. Coordinated motions by a converter formed by DNA-disengaged RuvB subunits stimulates ATP hydrolysis and nucleotide exchange. Immobilization of the converter enables RuvB to convert the ATP-contained energy into a lever motion, pulling 2 nucleotides of DNA out of the RuvA tetramer per ATP hydrolyzed, thus driving DNA branch migration. The RuvB motors rotate together with the DNA substrate, which together with the progressing nucleotide cycle form the mechanistic basis for DNA recombination by continuous HJ branch migration. Branch migration allows RuvC to scan DNA until it finds its consensus sequence, where it cleaves and resolves cruciform DNA. In Geobacter sp. (strain M21), this protein is Holliday junction branch migration complex subunit RuvB.